The chain runs to 140 residues: Large ribosomal subunit protein uL11 (140 aa).

This sequence belongs to the universal ribosomal protein uL11 family. In terms of assembly, part of the ribosomal stalk of the 50S ribosomal subunit. Interacts with L10 and the large rRNA to form the base of the stalk. L10 forms an elongated spine to which L12 dimers bind in a sequential fashion forming a multimeric L10(L12)X complex. One or more lysine residues are methylated.

Functionally, forms part of the ribosomal stalk which helps the ribosome interact with GTP-bound translation factors. This chain is Large ribosomal subunit protein uL11, found in Dehalococcoides mccartyi (strain CBDB1).